The primary structure comprises 319 residues: Ribonucleoside-diphosphate reductase small chain (319 aa).

Fe cation is bound by residues aspartate 70, glutamate 101, and histidine 104. The active site involves tyrosine 108. Fe cation-binding residues include glutamate 163, glutamate 197, and histidine 200. The segment at 313-319 is interaction with R1; it reads FSLDVDF.

Belongs to the ribonucleoside diphosphate reductase small chain family. In terms of assembly, interacts with RNR1/OPG080 subunit. Can interact with host RNR1 supunit. The cofactor is Fe cation.

The enzyme catalyses a 2'-deoxyribonucleoside 5'-diphosphate + [thioredoxin]-disulfide + H2O = a ribonucleoside 5'-diphosphate + [thioredoxin]-dithiol. In terms of biological role, ribonucleoside-diphosphate reductase holoenzyme provides the precursors necessary for viral DNA synthesis. Allows virus growth in non-dividing cells. Catalyzes the biosynthesis of deoxyribonucleotides from the corresponding ribonucleotides. The chain is Ribonucleoside-diphosphate reductase small chain (OPG048) from Vaccinia virus (strain L-IVP) (VACV).